The sequence spans 100 residues: Urease subunit gamma (100 aa).

Belongs to the urease gamma subunit family. In terms of assembly, heterotrimer of UreA (gamma), UreB (beta) and UreC (alpha) subunits. Three heterotrimers associate to form the active enzyme.

Its subcellular location is the cytoplasm. The catalysed reaction is urea + 2 H2O + H(+) = hydrogencarbonate + 2 NH4(+). Its pathway is nitrogen metabolism; urea degradation; CO(2) and NH(3) from urea (urease route): step 1/1. This is Urease subunit gamma from Micrococcus luteus (strain ATCC 4698 / DSM 20030 / JCM 1464 / CCM 169 / CCUG 5858 / IAM 1056 / NBRC 3333 / NCIMB 9278 / NCTC 2665 / VKM Ac-2230) (Micrococcus lysodeikticus).